The following is a 279-amino-acid chain: Thymidylate synthase (279 aa).

141–142 (RR) contributes to the dUMP binding site. The Nucleophile role is filled by C161. Residues 181–184 (RSND), N192, and 222–224 (HVY) each bind dUMP. D184 lines the (6R)-5,10-methylene-5,6,7,8-tetrahydrofolate pocket. A278 lines the (6R)-5,10-methylene-5,6,7,8-tetrahydrofolate pocket.

It belongs to the thymidylate synthase family. Homodimer.

The catalysed reaction is dUMP + (6R)-5,10-methylene-5,6,7,8-tetrahydrofolate = 7,8-dihydrofolate + dTMP. It participates in pyrimidine metabolism; dTTP biosynthesis. Its function is as follows. Provides the sole de novo source of dTMP for DNA biosynthesis. The protein is Thymidylate synthase (thyP3) of Bacillus subtilis (Bacteriophage phi-3T).